Here is a 235-residue protein sequence, read N- to C-terminus: Glycerol-3-phosphate acyltransferase (235 aa).

6 helical membrane-spanning segments follow: residues 4-24 (LLAILAVSYIIGSIPTSLVAG), 56-76 (VVTLIDIVKGVVAAVSVVAFF), 94-114 (LLAGMSAVIGHVFTLFAGFKG), 122-142 (AGMLIGIAPVSMLMVVGIFLL), 152-172 (VASMLAAIAFPLIIAIRKYIF), and 191-211 (FHDSLDYHLMIFGLIVALAIL).

This sequence belongs to the PlsY family. As to quaternary structure, probably interacts with PlsX.

Its subcellular location is the cell inner membrane. The enzyme catalyses an acyl phosphate + sn-glycerol 3-phosphate = a 1-acyl-sn-glycero-3-phosphate + phosphate. It functions in the pathway lipid metabolism; phospholipid metabolism. Its function is as follows. Catalyzes the transfer of an acyl group from acyl-phosphate (acyl-PO(4)) to glycerol-3-phosphate (G3P) to form lysophosphatidic acid (LPA). This enzyme utilizes acyl-phosphate as fatty acyl donor, but not acyl-CoA or acyl-ACP. The chain is Glycerol-3-phosphate acyltransferase from Pelodictyon phaeoclathratiforme (strain DSM 5477 / BU-1).